Here is a 113-residue protein sequence, read N- to C-terminus: Urease subunit beta (113 aa).

It belongs to the urease beta subunit family. In terms of assembly, heterotrimer of UreA (gamma), UreB (beta) and UreC (alpha) subunits. Three heterotrimers associate to form the active enzyme.

It is found in the cytoplasm. The enzyme catalyses urea + 2 H2O + H(+) = hydrogencarbonate + 2 NH4(+). Its pathway is nitrogen metabolism; urea degradation; CO(2) and NH(3) from urea (urease route): step 1/1. The chain is Urease subunit beta from Nitrosospira multiformis (strain ATCC 25196 / NCIMB 11849 / C 71).